The sequence spans 453 residues: tRNA modification GTPase MnmE (453 aa).

(6S)-5-formyl-5,6,7,8-tetrahydrofolate-binding residues include Arg-22, Glu-79, and Lys-119. Residues 215–376 (GMKVVIAGRP…LKLHLKSLMG (162 aa)) enclose the TrmE-type G domain. Position 225 (Asn-225) interacts with K(+). Residues 225–230 (NAGKSS), 244–250 (TEIAGTT), 269–272 (DTAG), and 334–337 (NKAD) contribute to the GTP site. A Mg(2+)-binding site is contributed by Ser-229. Residues Thr-244, Ile-246, and Thr-249 each coordinate K(+). Thr-250 contributes to the Mg(2+) binding site. A (6S)-5-formyl-5,6,7,8-tetrahydrofolate-binding site is contributed by Lys-453.

This sequence belongs to the TRAFAC class TrmE-Era-EngA-EngB-Septin-like GTPase superfamily. TrmE GTPase family. In terms of assembly, homodimer. Heterotetramer of two MnmE and two MnmG subunits. It depends on K(+) as a cofactor.

It localises to the cytoplasm. In terms of biological role, exhibits a very high intrinsic GTPase hydrolysis rate. Involved in the addition of a carboxymethylaminomethyl (cmnm) group at the wobble position (U34) of certain tRNAs, forming tRNA-cmnm(5)s(2)U34. The polypeptide is tRNA modification GTPase MnmE (Shewanella sp. (strain W3-18-1)).